The chain runs to 444 residues: Phosphoglucosamine mutase (444 aa).

Residue serine 101 is the Phosphoserine intermediate of the active site. Mg(2+)-binding residues include serine 101, aspartate 240, aspartate 242, and aspartate 244. The residue at position 101 (serine 101) is a Phosphoserine.

Belongs to the phosphohexose mutase family. Mg(2+) is required as a cofactor. Activated by phosphorylation.

The enzyme catalyses alpha-D-glucosamine 1-phosphate = D-glucosamine 6-phosphate. In terms of biological role, catalyzes the conversion of glucosamine-6-phosphate to glucosamine-1-phosphate. The chain is Phosphoglucosamine mutase from Photobacterium profundum (strain SS9).